The following is a 547-amino-acid chain: Large cysteine-rich periplasmic protein OmcB, serovar E (547 aa).

The signal sequence occupies residues 1–22; that stretch reads MNKLIRRAVTIFAVTSVASLFA. The propeptide occupies 23 to 40; sequence SGVLETSMAESLSTNVIS. Residues 46 to 83 are disordered; the sequence is AKDNTSHKSKKARKNHSKETLVDRKEVAPVHESKATGP. Positions 52–61 are enriched in basic residues; sequence HKSKKARKNH. Basic and acidic residues predominate over residues 62 to 79; sequence SKETLVDRKEVAPVHESK.

In terms of assembly, part of a disulfide cross-linked outer membrane complex (COMC) composed of the major outer membrane porin (MOMP), the small cysteine-rich protein (OmcA) and the large cysteine-rich periplasmic protein (OmcB).

The protein localises to the periplasm. In terms of biological role, in elementary bodies (EBs, the infectious stage, which is able to survive outside the host cell) provides the structural integrity of the outer envelope through disulfide cross-links with the small cysteine-rich protein and the major outer membrane protein. It has been described in publications as the Sarkosyl-insoluble COMC (Chlamydia outer membrane complex), and serves as the functional equivalent of peptidoglycan. The sequence is that of Large cysteine-rich periplasmic protein OmcB, serovar E (omcB) from Chlamydia trachomatis.